The sequence spans 726 residues: Germacradienol/geosmin synthase (726 aa).

The tract at residues 2–354 is germacradienol/germacrene D synthase; sequence TQQPFQLPHF…TSAADVGALL (353 aa). Mg(2+) is bound by residues aspartate 86, glutamate 91, asparagine 267, threonine 271, glutamine 276, aspartate 455, asparagine 598, serine 602, and glutamate 606. Positions 86–91 match the DDXXD motif 1; degenerate motif; it reads DDHFLE. Residues 355–726 form a geosmin synthase region; sequence ADAVAQRARS…VPRSSPALTH (372 aa). Positions 455 to 459 match the DDXXD motif 2; degenerate motif; it reads DDYYP.

This sequence belongs to the terpene synthase family. Mg(2+) is required as a cofactor.

It catalyses the reaction (2E,6E)-farnesyl diphosphate + H2O = (1E,4S,5E,7R)-germacra-1(10),5-dien-11-ol + diphosphate. It carries out the reaction (1E,4S,5E,7R)-germacra-1(10),5-dien-11-ol + H2O = (-)-geosmin + acetone. The enzyme catalyses (2E,6E)-farnesyl diphosphate = (-)-germacrene D + diphosphate. Its pathway is secondary metabolite biosynthesis; geosmin biosynthesis. The protein operates within sesquiterpene biosynthesis; germacradienol biosynthesis; germacradienol from farnesyl diphosphate: step 1/1. It participates in sesquiterpene biosynthesis; germacrene D biosynthesis; germacrene D from farnesyl diphosphate: step 1/1. Its function is as follows. Tow-domain protein where the N-terminal domain catalyzes the cyclization of farnesyl diphosphate (FPP) to a 85:15 mixture of the sesquiterpene alcohol germacradienol and the sesquiterpene hydrocarbon germacrene D. The C-terminal domain partially converts the germacradienol formed into geosmin, the characteristic odoriferous ('earthy aroma') constituent of Streptomyces species. This is Germacradienol/geosmin synthase (cyc2) from Streptomyces coelicolor (strain ATCC BAA-471 / A3(2) / M145).